The chain runs to 253 residues: MLTKRIIPCLDVKGGRVVKGVQFLELRDAGDPVEIAELYDRQGADELTFLDITASSDERSIIIDVVRRTAERVFMPLTVGGGVRTVDDIRNLLNAGADKVSINTAAVHRPEFVREAAERFGSQCTVVAIDARQVPGENRWEVYTHGGRNPTGIDAVEWARRMEEYGAGEILLTSMDRDGTKDGYDIPLTRAIVDAVSIPVIASGGVGNLEHLYDGFVKAGASACLAASIFHYKEYTIGEAKEYLRQRGVPVRL.

Catalysis depends on residues D11 and D130.

It belongs to the HisA/HisF family. As to quaternary structure, heterodimer of HisH and HisF.

It is found in the cytoplasm. It carries out the reaction 5-[(5-phospho-1-deoxy-D-ribulos-1-ylimino)methylamino]-1-(5-phospho-beta-D-ribosyl)imidazole-4-carboxamide + L-glutamine = D-erythro-1-(imidazol-4-yl)glycerol 3-phosphate + 5-amino-1-(5-phospho-beta-D-ribosyl)imidazole-4-carboxamide + L-glutamate + H(+). It functions in the pathway amino-acid biosynthesis; L-histidine biosynthesis; L-histidine from 5-phospho-alpha-D-ribose 1-diphosphate: step 5/9. Functionally, IGPS catalyzes the conversion of PRFAR and glutamine to IGP, AICAR and glutamate. The HisF subunit catalyzes the cyclization activity that produces IGP and AICAR from PRFAR using the ammonia provided by the HisH subunit. The chain is Imidazole glycerol phosphate synthase subunit HisF from Geobacter sulfurreducens (strain ATCC 51573 / DSM 12127 / PCA).